An 833-amino-acid chain; its full sequence is Neuronal tyrosine-phosphorylated phosphoinositide-3-kinase adapter 1 (833 aa).

5 disordered regions span residues 1 to 45 (MNLL…PGVR), 64 to 191 (PASQ…LQRL), 219 to 423 (VFRG…RELP), 645 to 674 (EEDGARAWNGSTEGPGKVEHEDRGPVPSGI), and 736 to 765 (HTPRPCSQPRDALSQTHPVLPLPLPPQPAR). Residues 8–25 (TKLEWRQHKEEEAKRSSS) are compositionally biased toward basic and acidic residues. Residues 76-181 (STMAPRSLSC…DESCAPAPSP (106 aa)) are involved in CYFIP1- and NCKAP1-binding. The span at 111–120 (PPAKPRRHPS) shows a compositional bias: basic residues. Residues 162–171 (SPNTQLSVSF) show a composition bias toward polar residues. The span at 220 to 239 (FRGGGRSGGGLAGPPLGSGG) shows a compositional bias: gly residues. Residues 248–257 (SDSEDSEAIY) are compositionally biased toward acidic residues. The span at 275-285 (GPPPLTAPSPP) shows a compositional bias: pro residues.

This sequence belongs to the NYAP family. In terms of assembly, interacts with ACOT9, ARHGAP26 and PIK3R2. Interacts with components of the WAVE1 complex, CYFIP1 and NCKAP1; this interaction mediates PI3K-WAVE1 association and actin cytoskeleton remodeling. Phosphorylated on tyrosine residues by FYN upon stimulation with CNTN5. Phosphorylation begins at 14 dpc, reaches a peak during perinatal days in brain, then gradually decreases. In terms of tissue distribution, expressed predominantly in brain where it is present in the neurons, but not in astrocytes or oligodendrites.

In terms of biological role, activates PI3K and concomitantly recruits the WAVE1 complex to the close vicinity of PI3K and regulates neuronal morphogenesis. The polypeptide is Neuronal tyrosine-phosphorylated phosphoinositide-3-kinase adapter 1 (Nyap1) (Mus musculus (Mouse)).